The primary structure comprises 326 residues: MQKKRVFSGIQPTGQIHLGNYLGAIKHWVELQDEYENLFCIVNSHAITLPIEPIFLKSQTYELVKLLLACGISPKQSGLFIQSEVDEHPALAWLLDCQVSMGEMQRMTQFKDKSLKNPKSVNVGLFNYPILMASDILLYQSDLVPVGEDQKQHLELTRNVAEKFNRDFGNCFKVPEPLIAKVGARVMGLDDPKVKMSKSHKGANHAIFLLDEPDVIVKKIKKAATDSMGVIAFDETREGVFNLLNIYMLLSDESPEKIEERFRNKGYGDFKKELAEVVIQSLKPIQERYQEISDDEVKAVLNCGAEKARPLARATYQKAKELMGLI.

ATP is bound by residues 11 to 13 (QPT) and 19 to 20 (GN). Residues 12–20 (PTGQIHLGN) carry the 'HIGH' region motif. Aspartate 135 is an L-tryptophan binding site. ATP is bound by residues 147–149 (GED), valine 186, and 195–199 (KMSKS). Positions 195-199 (KMSKS) match the 'KMSKS' region motif.

Belongs to the class-I aminoacyl-tRNA synthetase family. In terms of assembly, homodimer.

The protein resides in the cytoplasm. The enzyme catalyses tRNA(Trp) + L-tryptophan + ATP = L-tryptophyl-tRNA(Trp) + AMP + diphosphate + H(+). In terms of biological role, catalyzes the attachment of tryptophan to tRNA(Trp). This chain is Tryptophan--tRNA ligase, found in Helicobacter pylori (strain J99 / ATCC 700824) (Campylobacter pylori J99).